A 452-amino-acid chain; its full sequence is General transcription and DNA repair factor IIH subunit TFB2 (452 aa).

Belongs to the TFB2 family. In terms of assembly, component of the 7-subunit TFIIH core complex composed of XPB, XPD, TFB1/GTF2H1, GTF2H2/P44, TFB4/GTF2H3, TFB2/GTF2H4 and TFB5/GTF2H5, which is active in NER. The core complex associates with the 3-subunit CDK-activating kinase (CAK) module composed of CYCH1/cyclin H1, CDKD and MAT1/At4g30820 to form the 10-subunit holoenzyme (holo-TFIIH) active in transcription.

It is found in the nucleus. Component of the general transcription and DNA repair factor IIH (TFIIH) core complex, which is involved in general and transcription-coupled nucleotide excision repair (NER) of damaged DNA and, when complexed to CAK, in RNA transcription by RNA polymerase II. In NER, TFIIH acts by opening DNA around the lesion to allow the excision of the damaged oligonucleotide and its replacement by a new DNA fragment. In transcription, TFIIH has an essential role in transcription initiation. When the pre-initiation complex (PIC) has been established, TFIIH is required for promoter opening and promoter escape. Phosphorylation of the C-terminal tail (CTD) of the largest subunit of RNA polymerase II by the kinase module CAK controls the initiation of transcription. The protein is General transcription and DNA repair factor IIH subunit TFB2 of Arabidopsis thaliana (Mouse-ear cress).